Here is a 208-residue protein sequence, read N- to C-terminus: MASKCPKCDKTVCFAEKVSSLGKDWHKFCLKCERCSKTLTPGGHAEHDGKPFCHKPCYATLFGPKGVNIGGAGSYIYEKPLAEGPQVTGPIEVPAARAEERKASGPPKGPSRASSVTTFTGEPNTCPRCSKKVYFAEKVTSLGKDWHRPCLHCERCGKTLTPGGHAEHDGQPYCHKPCYGILFGPKGVNTGAVGSYIYDRDPEGKVQP.

The LIM zinc-binding 1 domain maps to 5–57 (CPKCDKTVCFAEKVSSLGKDWHKFCLKCERCSKTLTPGGHAEHDGKPFCHKPC). Lys23 is modified (N6-acetyllysine). Residues 98–119 (AEERKASGPPKGPSRASSVTTF) form a disordered region. Position 104 is a phosphoserine (Ser104). In terms of domain architecture, LIM zinc-binding 2 spans 126–178 (CPRCSKKVYFAEKVTSLGKDWHRPCLHCERCGKTLTPGGHAEHDGQPYCHKPC). N6-acetyllysine is present on residues Lys138 and Lys144.

Interacts with TGFB1I1.

The protein is Cysteine-rich protein 2 (CRIP2) of Pongo abelii (Sumatran orangutan).